The following is a 526-amino-acid chain: Acid-sensing ion channel 1 (526 aa).

The Cytoplasmic portion of the chain corresponds to 1–49 (MELKTEEEEVGGVQPVSIQAFASSSTLHGLAHIFSYERLSLKRALWALC). Residues 50–66 (FLGSLAVLLCVCTERVQ) traverse the membrane as a helical segment. At 67–425 (YYFCYHHVTK…ETIEQKKAYE (359 aa)) the chain is on the extracellular side. Cystine bridges form between Cys-93–Cys-194, Cys-172–Cys-179, Cys-290–Cys-365, Cys-308–Cys-361, Cys-312–Cys-359, Cys-321–Cys-343, and Cys-323–Cys-335. N-linked (GlcNAc...) asparagine glycans are attached at residues Asn-366 and Asn-393. Residues 426–456 (IAGLLGDIGGQMGLFIGASILTVLELFDYAY) traverse the membrane as a discontinuously helical segment. Positions 442 to 444 (GAS) match the GAS motif; ion selectivity filter motif. The Cytoplasmic portion of the chain corresponds to 457–526 (EVIKHRLCRR…ARGTFEDFTC (70 aa)). 2 positions are modified to phosphoserine: Ser-477 and Ser-497.

It belongs to the amiloride-sensitive sodium channel (TC 1.A.6) family. ASIC1 subfamily. Homotrimer. Heterotrimer; with other ASIC proteins producing channel with different properties. Interacts with PICK1; regulates ASIC1 clustering in membranes. Interacts with STOM; alters heterotrimeric ASIC channels activity. PH-gating could be regulated by serine proteases. In terms of processing, phosphorylation by PKA regulates interaction with PICK1 and subcellular localization. Phosphorylation by PKC may regulate the channel. As to expression, expressed in dorsal root ganglia and sciatic nerve (at protein level). Widely distributed throughout the brain. Expressed in olfactory bulb, neo and allocortical regions, dentate granule cells, pyramidal cells of CA1-CA3 subfields of the hippocampal formation, habenula, basolateral amygdaloid nuclei, and in the Purkinje and granule cells of the cerebellum. Diffusely detected over most other regions of the basal ganglia, including thalamic nuclei, substantia nigra, striatum and globus pallidus, hypothalamus, midbrain, pons, medulla and choroid plexus. In terms of tissue distribution, expressed only in dorsal root ganglion (DRG). Expressed exclusively in trigeminal ganglion and dorsal root ganglion.

The protein localises to the cell membrane. Its subcellular location is the postsynaptic cell membrane. The protein resides in the cell projection. It localises to the dendrite. The catalysed reaction is Na(+)(in) = Na(+)(out). It catalyses the reaction Li(+)(in) = Li(+)(out). The enzyme catalyses K(+)(in) = K(+)(out). It carries out the reaction Ca(2+)(in) = Ca(2+)(out). The catalysed reaction is H(+)(in) = H(+)(out). With respect to regulation, inhibited by the diuretic drug amiloride. External calcium is required to potentiate proton activation of ASIC1 at physiological concentrations, but at higher, non-physiological concentrations, it inhibits activation. Also potentiated by other multivalent cations like Mg(2+), Ba(2+). Activated by FMRFamide-related neuropeptides. Inhibited by anti-inflammatory drugs like salicylic acid. The spider venom psalmotoxin-1 specifically inhibits the ASIC1 homotrimer. The snake venom mambalgin-1, mambalgin-2 and mambalgin-3 inhibit the homotrimer of Asic1a (ASIC1 isoform 1). The snake venom mambalgin-1 and mambalgin-2 inhibit heterotrimers of Asic1a-Asic1b (ASIC1 isoform 1-ASIC1 isoform 3). Heterotrimer of Asic1a-Asic2a is inhibited by the snake venom mambalgin-1, mambalgin-2 and mambalgin-3. Heterotrimer of Asic1a-Asic2b is inhibited by the snake venom mambalgin-1 and mambalgin-2. The spider venom Pi-theraphotoxin-Hm3a inhibits the homotrimer of Asic1a (ASIC1 isoform 1). The spider venom Pi-theraphotoxin-Hm3a inhibits heterotrimers of Asic1a-Asic1b (ASIC1 isoform 1-ASIC1 isoform 3). The spider venom Pi-hexatoxin-Hi1a inhibits the ASIC1 homotrimer. Not inhibited by extracellular calcium. Functionally, forms voltage-independent, pH-gated trimeric sodium channels that act as postsynaptic excitatory receptors in the nervous system, playing a crucial role in regulating synaptic plasticity, learning, and memory. Upon extracellular pH drop this channel elicits transient, fast activating, and completely desensitizing inward currents. Displays high selectivity for sodium ions but can also permit the permeation of other cations. Regulates more or less directly intracellular calcium concentration and CaMKII phosphorylation, and thereby the density of dendritic spines. Modulates neuronal activity in the circuits underlying innate fear. Permeable to other cations including calcium, lithium and potassium. In terms of biological role, pH activation and steady-state inactivation are shifted to more acidic values. Forms channels that are not permeable to calcium as it discrimates stronger between monovalent cations. Its function is as follows. Has no pH-gated sodium channel activity per se but can associate with other ASICs and regulate their pH-sensitivity. The protein is Acid-sensing ion channel 1 of Rattus norvegicus (Rat).